Consider the following 455-residue polypeptide: Chromosomal replication initiator protein DnaA 2 (455 aa).

Residues 1–95 (MLTCNDCSTW…KRSSPQIAAS (95 aa)) are domain I, interacts with DnaA modulators. Residues 96–112 (VTKPAVEVSEENKDFQL) are domain II. Residues 113–328 (KLNGAYRFDN…GAINKLTAYC (216 aa)) are domain III, AAA+ region. ATP contacts are provided by G157, G159, K160, and T161. Residues 329 to 455 (LLFNKPLTET…IAIDSPQHFV (127 aa)) form a domain IV, binds dsDNA region.

The protein belongs to the DnaA family. As to quaternary structure, oligomerizes as a right-handed, spiral filament on DNA at oriC.

Its subcellular location is the cytoplasm. In terms of biological role, plays an essential role in the initiation and regulation of chromosomal replication. ATP-DnaA binds to the origin of replication (oriC) to initiate formation of the DNA replication initiation complex once per cell cycle. Binds the DnaA box (a 9 base pair repeat at the origin) and separates the double-stranded (ds)DNA. Forms a right-handed helical filament on oriC DNA; dsDNA binds to the exterior of the filament while single-stranded (ss)DNA is stabiized in the filament's interior. The ATP-DnaA-oriC complex binds and stabilizes one strand of the AT-rich DNA unwinding element (DUE), permitting loading of DNA polymerase. After initiation quickly degrades to an ADP-DnaA complex that is not apt for DNA replication. Binds acidic phospholipids. This chain is Chromosomal replication initiator protein DnaA 2, found in Chlamydia muridarum (strain MoPn / Nigg).